The following is a 354-amino-acid chain: MMNKNKKLMVMAGGTGGHVFPGLAVAKQLQQQGWQIRWLGTADRMEAELVPKHGIEIDFIQVKGLRGQGLMRLLKAPFQIVNAILQARRHLLAYQPDAVLGMGGYVSGPGGIAAWLMGIPVVLHEQNAVAGLTNQWLAKIARRVFQAFPGAFADAPVVGNPVRQDVVQLAAPEQRFATRNGAIRILVMGGSQGARILNQTLPAVMAALGEGYEIRHQAGKNSQQDVAEAYAAAGVESAQVTEFIDDVADAYAWADLLICRSGALTVSEVSAAGVGAIFIPFMHKDRQQALNADHLVACGAAKMIEQPDLSVEKLTQMVRELDRAQLLSMAQKARQAAKLDADKVVAQAIIAITE.

UDP-N-acetyl-alpha-D-glucosamine is bound by residues 15–17, N127, R163, S191, I244, 263–268, and Q288; these read TGG and ALTVSE.

The protein belongs to the glycosyltransferase 28 family. MurG subfamily.

It is found in the cell inner membrane. It carries out the reaction di-trans,octa-cis-undecaprenyl diphospho-N-acetyl-alpha-D-muramoyl-L-alanyl-D-glutamyl-meso-2,6-diaminopimeloyl-D-alanyl-D-alanine + UDP-N-acetyl-alpha-D-glucosamine = di-trans,octa-cis-undecaprenyl diphospho-[N-acetyl-alpha-D-glucosaminyl-(1-&gt;4)]-N-acetyl-alpha-D-muramoyl-L-alanyl-D-glutamyl-meso-2,6-diaminopimeloyl-D-alanyl-D-alanine + UDP + H(+). The protein operates within cell wall biogenesis; peptidoglycan biosynthesis. In terms of biological role, cell wall formation. Catalyzes the transfer of a GlcNAc subunit on undecaprenyl-pyrophosphoryl-MurNAc-pentapeptide (lipid intermediate I) to form undecaprenyl-pyrophosphoryl-MurNAc-(pentapeptide)GlcNAc (lipid intermediate II). This chain is UDP-N-acetylglucosamine--N-acetylmuramyl-(pentapeptide) pyrophosphoryl-undecaprenol N-acetylglucosamine transferase, found in Vibrio cholerae serotype O1 (strain ATCC 39541 / Classical Ogawa 395 / O395).